The following is a 278-amino-acid chain: uncharacterized protein (278 aa).

A compositionally biased stretch (basic and acidic residues) spans 1-16; the sequence is MFGLKVKDAQKDDQKS. 2 disordered regions span residues 1–86 and 98–126; these read MFGL…RGSN and FGTT…TPWL. Composition is skewed to low complexity over residues 33 to 45 and 99 to 117; these read QGTS…RGSS and GTTS…STPS.

It belongs to the adhesin P1 family.

This is an uncharacterized protein from Mycoplasma pneumoniae (strain ATCC 29342 / M129 / Subtype 1) (Mycoplasmoides pneumoniae).